The primary structure comprises 665 residues: MTEFGLQAPFSPTGDQPSAIAQLVASIEGGNRYQTLLGATGTGKTFSIAAVIEKIGRPTLVLAHNKTLAAQLCNELREFFPNNAVEYFVSYYDYYQPEAYIPVTDTYIEKTAAINDEIDMLRHSATRSLFERRDVIVVASISCIYGLGIPAEYLKAAIPLQIGMEVNQREILRDLASVQYSRNDVEMGRGRFRVRGDVLEIGPAYEDRIIRVEFFGDEIDAIRYIDPVTGEIINSLQAVNIYPARHFVTPEERLEVACEDIAYELKQRKAELEETGKLVEAQRIDQRTRYDLEMLREVGYCNGVENYSRHLAGRQAGEPPESLIDYFPKDWLLVIDESHVTVPQIRGMYNGDQARKKVLIEHGFRLPSAADNRPLKAEEFWQKVNQCIFVSATPGNWELEISENRIVEQVIRPTGVIDPEISVRPTEGQIDDLLGEIKDRIDLHERVLITTLTKRMAEDLTEYLQEHGVKVRYLHSEINSIQRIEILQDLRQGSFDVLVGVNLLREGLDLPEVSLVAIMDADKEGFLRAERSLIQTIGRAARHIRGQAILYADNMTDSMIKAIEETDRRRGIQVAYNKLHGITPQPIVKKSSNAILSFLEVSRRLNATDLKVVEEHIDELPLEEIPNLIDKLEAQMKEASKKLEFEEAAKLRDRIKQLRDKLVGR.

In terms of domain architecture, Helicase ATP-binding spans Ala-25–Arg-412. Position 38 to 45 (Gly-38 to Thr-45) interacts with ATP. Positions Tyr-91–Ile-114 match the Beta-hairpin motif. The Helicase C-terminal domain maps to Gln-429–Thr-583. Positions Pro-626–Lys-661 constitute a UVR domain.

It belongs to the UvrB family. In terms of assembly, forms a heterotetramer with UvrA during the search for lesions. Interacts with UvrC in an incision complex.

It is found in the cytoplasm. Its function is as follows. The UvrABC repair system catalyzes the recognition and processing of DNA lesions. A damage recognition complex composed of 2 UvrA and 2 UvrB subunits scans DNA for abnormalities. Upon binding of the UvrA(2)B(2) complex to a putative damaged site, the DNA wraps around one UvrB monomer. DNA wrap is dependent on ATP binding by UvrB and probably causes local melting of the DNA helix, facilitating insertion of UvrB beta-hairpin between the DNA strands. Then UvrB probes one DNA strand for the presence of a lesion. If a lesion is found the UvrA subunits dissociate and the UvrB-DNA preincision complex is formed. This complex is subsequently bound by UvrC and the second UvrB is released. If no lesion is found, the DNA wraps around the other UvrB subunit that will check the other stand for damage. The polypeptide is UvrABC system protein B (Nostoc sp. (strain PCC 7120 / SAG 25.82 / UTEX 2576)).